The chain runs to 404 residues: LL-diaminopimelate aminotransferase (404 aa).

Substrate contacts are provided by Y15 and G42. Pyridoxal 5'-phosphate contacts are provided by residues Y72, 108–109 (AK), Y132, N188, Y219, and 247–249 (SFS). Residues K109, Y132, and N188 each coordinate substrate. Residue K250 is modified to N6-(pyridoxal phosphate)lysine. Pyridoxal 5'-phosphate contacts are provided by R258 and N288. Substrate-binding residues include N288 and R384.

This sequence belongs to the class-I pyridoxal-phosphate-dependent aminotransferase family. LL-diaminopimelate aminotransferase subfamily. Homodimer. Pyridoxal 5'-phosphate serves as cofactor.

It carries out the reaction (2S,6S)-2,6-diaminopimelate + 2-oxoglutarate = (S)-2,3,4,5-tetrahydrodipicolinate + L-glutamate + H2O + H(+). It participates in amino-acid biosynthesis; L-lysine biosynthesis via DAP pathway; LL-2,6-diaminopimelate from (S)-tetrahydrodipicolinate (aminotransferase route): step 1/1. In terms of biological role, involved in the synthesis of meso-diaminopimelate (m-DAP or DL-DAP), required for both lysine and peptidoglycan biosynthesis. Catalyzes the direct conversion of tetrahydrodipicolinate to LL-diaminopimelate. This is LL-diaminopimelate aminotransferase from Agathobacter rectalis (strain ATCC 33656 / DSM 3377 / JCM 17463 / KCTC 5835 / VPI 0990) (Eubacterium rectale).